A 64-amino-acid chain; its full sequence is Lectin-A (64 aa).

2 consecutive Chitin-binding type-1 domains span residues 1 to 20 and 22 to 45; these read APEC…QVVT and DFDD…NTDA.

Post-translationally, glycosylated.

In terms of biological role, N-acetyl-D-glucosamine binding lectin. Shows low hemagglutinating activity towards human erythrocytes. Has low mitogenic activity towards human peripheral blood lymphocytes. The chain is Lectin-A from Phytolacca americana (American pokeweed).